Consider the following 544-residue polypeptide: Chromosomal replication initiator protein DnaA (544 aa).

The segment at 1–71 (MNDFWQHCSA…ADMARDFWHT (71 aa)) is domain I, interacts with DnaA modulators. The tract at residues 71–207 (TPIDVQFVLD…GETDSMYERS (137 aa)) is domain II. Over residues 90 to 105 (AAAPAPASARPASAPG) the composition is skewed to low complexity. 2 disordered regions span residues 90–111 (AAAP…GGSA) and 180–203 (AAAR…TDSM). The segment covering 191–200 (SAGSNGNGET) has biased composition (polar residues). A domain III, AAA+ region region spans residues 208–424 (KLNPVLTFDN…GALRKILAYS (217 aa)). ATP-binding residues include Gly252, Gly254, Lys255, and Thr256. Residues 425-544 (KFHGREITIE…LHVLEQTLKG (120 aa)) are domain IV, binds dsDNA.

Belongs to the DnaA family. Oligomerizes as a right-handed, spiral filament on DNA at oriC.

The protein localises to the cytoplasm. Its function is as follows. Plays an essential role in the initiation and regulation of chromosomal replication. ATP-DnaA binds to the origin of replication (oriC) to initiate formation of the DNA replication initiation complex once per cell cycle. Binds the DnaA box (a 9 base pair repeat at the origin) and separates the double-stranded (ds)DNA. Forms a right-handed helical filament on oriC DNA; dsDNA binds to the exterior of the filament while single-stranded (ss)DNA is stabiized in the filament's interior. The ATP-DnaA-oriC complex binds and stabilizes one strand of the AT-rich DNA unwinding element (DUE), permitting loading of DNA polymerase. After initiation quickly degrades to an ADP-DnaA complex that is not apt for DNA replication. Binds acidic phospholipids. This chain is Chromosomal replication initiator protein DnaA, found in Paraburkholderia xenovorans (strain LB400).